The following is a 211-amino-acid chain: Redox-sensing transcriptional repressor Rex (211 aa).

Residues 18-57 (LYYRFLENLHASGKQRVSSSELSEAVKVDSATIRRDFSYF) constitute a DNA-binding region (H-T-H motif). An NAD(+)-binding site is contributed by 92–97 (GVGNLG).

This sequence belongs to the transcriptional regulatory Rex family. Homodimer.

It is found in the cytoplasm. Functionally, modulates transcription in response to changes in cellular NADH/NAD(+) redox state. This is Redox-sensing transcriptional repressor Rex from Halalkalibacterium halodurans (strain ATCC BAA-125 / DSM 18197 / FERM 7344 / JCM 9153 / C-125) (Bacillus halodurans).